The sequence spans 51 residues: Large ribosomal subunit protein eL40 (51 aa).

Belongs to the eukaryotic ribosomal protein eL40 family.

The protein is Large ribosomal subunit protein eL40 of Thermofilum pendens (strain DSM 2475 / Hrk 5).